A 144-amino-acid polypeptide reads, in one-letter code: Galectin b (144 aa).

The Galectin domain occupies 1–138 (DHIDLEFDVG…DAVLRKLCVV (138 aa)).

Functionally, lectin that binds beta-galactoside and a wide array of complex carbohydrates. The sequence is that of Galectin b from Aplysina lactuca (Marine sponge).